Reading from the N-terminus, the 310-residue chain is Porphobilinogen deaminase (310 aa).

The residue at position 241 (C241) is an S-(dipyrrolylmethanemethyl)cysteine.

Belongs to the HMBS family. As to quaternary structure, monomer. The cofactor is dipyrromethane.

It carries out the reaction 4 porphobilinogen + H2O = hydroxymethylbilane + 4 NH4(+). The protein operates within porphyrin-containing compound metabolism; protoporphyrin-IX biosynthesis; coproporphyrinogen-III from 5-aminolevulinate: step 2/4. Its function is as follows. Tetrapolymerization of the monopyrrole PBG into the hydroxymethylbilane pre-uroporphyrinogen in several discrete steps. The sequence is that of Porphobilinogen deaminase from Pelobacter propionicus (strain DSM 2379 / NBRC 103807 / OttBd1).